Reading from the N-terminus, the 142-residue chain is Nitrogen fixation protein NifU 2 (142 aa).

The tract at residues 1-36 (MKDLFDESLTLDTGSAAPGTAPGRPRRRQPAGGKAP) is disordered. Low complexity predominate over residues 14–23 (GSAAPGTAPG).

It belongs to the NifU family.

In terms of biological role, may be involved in the formation or repair of [Fe-S] clusters present in iron-sulfur proteins. This is Nitrogen fixation protein NifU 2 (nifU2) from Rhodobacter capsulatus (Rhodopseudomonas capsulata).